The primary structure comprises 78 residues: UPF0349 protein Sca_0544 (78 aa).

This sequence belongs to the UPF0349 family.

This chain is UPF0349 protein Sca_0544, found in Staphylococcus carnosus (strain TM300).